A 197-amino-acid chain; its full sequence is tRNA(Phe) 7-((3-amino-3-carboxypropyl)-4-demethylwyosine(37)-N(4))-methyltransferase (197 aa).

It belongs to the TYW3 family.

The enzyme catalyses 4-demethyl-7-[(3S)-3-amino-3-carboxypropyl]wyosine(37) in tRNA(Phe) + S-adenosyl-L-methionine = 7-[(3S)-3-amino-3-carboxypropyl]wyosine(37) in tRNA(Phe) + S-adenosyl-L-homocysteine + H(+). Functionally, S-adenosyl-L-methionine-dependent methyltransferase that acts as a component of the wyosine derivatives biosynthesis pathway. Probably methylates N-4 position of wybutosine-86 to produce wybutosine-72. The protein is tRNA(Phe) 7-((3-amino-3-carboxypropyl)-4-demethylwyosine(37)-N(4))-methyltransferase of Thermococcus sibiricus (strain DSM 12597 / MM 739).